Reading from the N-terminus, the 302-residue chain is Succinate--CoA ligase [ADP-forming] subunit alpha (302 aa).

CoA contacts are provided by residues 17–20 (TGST), lysine 43, and 96–98 (ITE). Tyrosine 159 lines the substrate pocket. Catalysis depends on histidine 247, which acts as the Tele-phosphohistidine intermediate.

This sequence belongs to the succinate/malate CoA ligase alpha subunit family. As to quaternary structure, heterotetramer of two alpha and two beta subunits.

It carries out the reaction succinate + ATP + CoA = succinyl-CoA + ADP + phosphate. The enzyme catalyses GTP + succinate + CoA = succinyl-CoA + GDP + phosphate. It functions in the pathway carbohydrate metabolism; tricarboxylic acid cycle; succinate from succinyl-CoA (ligase route): step 1/1. Functionally, succinyl-CoA synthetase functions in the citric acid cycle (TCA), coupling the hydrolysis of succinyl-CoA to the synthesis of either ATP or GTP and thus represents the only step of substrate-level phosphorylation in the TCA. The alpha subunit of the enzyme binds the substrates coenzyme A and phosphate, while succinate binding and nucleotide specificity is provided by the beta subunit. The sequence is that of Succinate--CoA ligase [ADP-forming] subunit alpha from Staphylococcus epidermidis (strain ATCC 35984 / DSM 28319 / BCRC 17069 / CCUG 31568 / BM 3577 / RP62A).